We begin with the raw amino-acid sequence, 908 residues long: Transferrin-binding protein A (908 aa).

The signal sequence occupies residues 1–24; the sequence is MQQQHLFRLNILCLSLMTALPVYA. Residues 38–45 carry the TonB box motif; that stretch reads DTIQVKAK. The TBDR plug domain maps to 51–176; sequence RDNEVTGLGK…LAGSVAFQTK (126 aa). In terms of domain architecture, TBDR beta-barrel spans 187–908; the sequence is QWGIQSKTAY…NYTFSLEMKF (722 aa). Residues 891 to 908 carry the TonB C-terminal box motif; the sequence is NRYAAPGRNYTFSLEMKF.

This sequence belongs to the TonB-dependent receptor family. As to quaternary structure, binds both human apo- and holo-transferrin (TF), via the TF C-terminus. Forms a large complex with TF and TbpB.

The protein resides in the cell outer membrane. In terms of biological role, neisseria acquires iron by extracting it from serum transferrin (TF) in its human host. Acts as a TF receptor and is required for TF utilization. Binds both apo- and holo-TF, via the TF C-terminus. In Neisseria meningitidis serogroup B, this protein is Transferrin-binding protein A.